A 543-amino-acid chain; its full sequence is Protein MGF 505-10R (543 aa).

The protein belongs to the asfivirus MGF 505 family.

Its function is as follows. Plays a role in virus cell tropism, and may be required for efficient virus replication in macrophages. This is Protein MGF 505-10R from African swine fever virus (isolate Tick/South Africa/Pretoriuskop Pr4/1996) (ASFV).